Reading from the N-terminus, the 284-residue chain is Cytosolic Fe-S cluster assembly factor NUBP2 homolog (284 aa).

27–34 contacts ATP; the sequence is GKGGVGKS. [4Fe-4S] cluster is bound by residues Cys200 and Cys203.

Belongs to the Mrp/NBP35 ATP-binding proteins family. NUBP2/CFD1 subfamily. In terms of assembly, heterotetramer of 2 NUBP1 and 2 NUBP2 chains. It depends on [4Fe-4S] cluster as a cofactor.

The protein localises to the cytoplasm. Component of the cytosolic iron-sulfur (Fe/S) protein assembly (CIA) machinery. Required for maturation of extramitochondrial Fe-S proteins. The NUBP1-NUBP2 heterotetramer forms a Fe-S scaffold complex, mediating the de novo assembly of an Fe-S cluster and its transfer to target apoproteins. The chain is Cytosolic Fe-S cluster assembly factor NUBP2 homolog from Monosiga brevicollis (Choanoflagellate).